The following is a 310-amino-acid chain: Apolipoprotein E (310 aa).

The N-terminal stretch at 1-18 (MKALWAVLLATLLTGCLS) is a signal peptide. 8 tandem repeats follow at residues 72–93 (VLME…EQLG), 94–115 (PVAE…ARLG), 116–137 (ADME…TMLG), 138–159 (QSTE…KRLM), 160–181 (RDAE…EGAE), 182–203 (RGVS…QRTA), 204–225 (NLGA…DRLR), and 226–247 (GRLE…EHME). The interval 72–247 (VLMEDTMTEV…RLEEMREHME (176 aa)) is 8 X 22 AA approximate tandem repeats. M135 is modified (methionine sulfoxide). The LDL and other lipoprotein receptors binding stretch occupies residues 150–160 (HLRKMRKRLMR). The segment at 150-160 (HLRKMRKRLMR) is LDL receptor binding. Heparin is bound at residue 154–157 (MRKR). The lipid-binding and lipoprotein association stretch occupies residues 202–282 (TANLGAGVAQ…GWFEPLVEDM (81 aa)). Position 221 to 228 (221 to 228 (GDRLRGRL)) interacts with heparin. The tract at residues 258–310 (QQIRLQAEIFQARLKGWFEPLVEDMQRQLANLVEKIQASTNSVLSTSVPQENQ) is homooligomerization. The specificity for association with VLDL stretch occupies residues 270–282 (RLKGWFEPLVEDM).

Belongs to the apolipoprotein A1/A4/E family. As to quaternary structure, homotetramer. May interact with ABCA1; functionally associated with ABCA1 in the biogenesis of HDLs. May interact with APP/A4 amyloid-beta peptide; the interaction is extremely stable in vitro but its physiological significance is unclear. May interact with MAPT. May interact with MAP2. In the cerebrospinal fluid, interacts with secreted SORL1. Interacts with PMEL; this allows the loading of PMEL luminal fragment on ILVs to induce fibril nucleation. APOE exists as multiple glycosylated and sialylated glycoforms within cells and in plasma. The extent of glycosylation and sialylation are tissue and context specific. Post-translationally, glycated in plasma VLDL. In terms of processing, phosphorylated by FAM20C in the extracellular medium.

It is found in the secreted. The protein resides in the extracellular space. The protein localises to the extracellular matrix. Its subcellular location is the extracellular vesicle. It localises to the endosome. It is found in the multivesicular body. Functionally, APOE is an apolipoprotein, a protein associating with lipid particles, that mainly functions in lipoprotein-mediated lipid transport between organs via the plasma and interstitial fluids. APOE is a core component of plasma lipoproteins and is involved in their production, conversion and clearance. Apolipoproteins are amphipathic molecules that interact both with lipids of the lipoprotein particle core and the aqueous environment of the plasma. As such, APOE associates with chylomicrons, chylomicron remnants, very low density lipoproteins (VLDL) and intermediate density lipoproteins (IDL) but shows a preferential binding to high-density lipoproteins (HDL). It also binds a wide range of cellular receptors including the LDL receptor/LDLR, the LDL receptor-related proteins LRP1, LRP2 and LRP8 and the very low-density lipoprotein receptor/VLDLR that mediate the cellular uptake of the APOE-containing lipoprotein particles. Finally, APOE also has a heparin-binding activity and binds heparan-sulfate proteoglycans on the surface of cells, a property that supports the capture and the receptor-mediated uptake of APOE-containing lipoproteins by cells. A main function of APOE is to mediate lipoprotein clearance through the uptake of chylomicrons, VLDLs, and HDLs by hepatocytes. APOE is also involved in the biosynthesis by the liver of VLDLs as well as their uptake by peripheral tissues ensuring the delivery of triglycerides and energy storage in muscle, heart and adipose tissues. By participating in the lipoprotein-mediated distribution of lipids among tissues, APOE plays a critical role in plasma and tissues lipid homeostasis. APOE is also involved in two steps of reverse cholesterol transport, the HDLs-mediated transport of cholesterol from peripheral tissues to the liver, and thereby plays an important role in cholesterol homeostasis. First, it is functionally associated with ABCA1 in the biogenesis of HDLs in tissues. Second, it is enriched in circulating HDLs and mediates their uptake by hepatocytes. APOE also plays an important role in lipid transport in the central nervous system, regulating neuron survival and sprouting. This is Apolipoprotein E (Apoe) from Grammomys surdaster (African woodland thicket rat).